The primary structure comprises 251 residues: Outer membrane protein assembly factor BamD (251 aa).

The first 19 residues, 1 to 19 (MKLTKLLSALLVIGLVLGG), serve as a signal peptide directing secretion. A lipid anchor (N-palmitoyl cysteine) is attached at Cys20. The S-diacylglycerol cysteine moiety is linked to residue Cys20. TPR repeat units follow at residues 33–66 (IATL…HPGN), 70–103 (PQAE…HPAN), and 166–199 (AGKE…YQTT).

Belongs to the BamD family. As to quaternary structure, part of the Bam complex.

The protein resides in the cell outer membrane. Part of the outer membrane protein assembly complex, which is involved in assembly and insertion of beta-barrel proteins into the outer membrane. The sequence is that of Outer membrane protein assembly factor BamD from Rickettsia prowazekii (strain Madrid E).